The primary structure comprises 93 residues: UPF0358 protein YlaN (93 aa).

It belongs to the UPF0358 family.

In terms of biological role, essential for cell growth and for normal cell shape. The polypeptide is UPF0358 protein YlaN (ylaN) (Bacillus subtilis (strain 168)).